Consider the following 570-residue polypeptide: Glutamate--tRNA ligase (570 aa).

The 'HIGH' region signature appears at P107–S117.

This sequence belongs to the class-I aminoacyl-tRNA synthetase family. Glutamate--tRNA ligase type 2 subfamily.

The protein resides in the cytoplasm. The enzyme catalyses tRNA(Glu) + L-glutamate + ATP = L-glutamyl-tRNA(Glu) + AMP + diphosphate. In terms of biological role, catalyzes the attachment of glutamate to tRNA(Glu) in a two-step reaction: glutamate is first activated by ATP to form Glu-AMP and then transferred to the acceptor end of tRNA(Glu). The polypeptide is Glutamate--tRNA ligase (Pyrobaculum calidifontis (strain DSM 21063 / JCM 11548 / VA1)).